A 60-amino-acid chain; its full sequence is UPF0434 protein HCH_02705 (60 aa).

This sequence belongs to the UPF0434 family.

This Hahella chejuensis (strain KCTC 2396) protein is UPF0434 protein HCH_02705.